Here is a 126-residue protein sequence, read N- to C-terminus: Large ribosomal subunit protein bL17 (126 aa).

Belongs to the bacterial ribosomal protein bL17 family. As to quaternary structure, part of the 50S ribosomal subunit. Contacts protein L32.

This Vibrio atlanticus (strain LGP32) (Vibrio splendidus (strain Mel32)) protein is Large ribosomal subunit protein bL17.